We begin with the raw amino-acid sequence, 562 residues long: Arf-GAP domain and FG repeat-containing protein 1 (562 aa).

Residues Glu-11–Val-135 enclose the Arf-GAP domain. A C4-type zinc finger spans residues Cys-29–Cys-52. The interval Gly-145–Glu-193 is disordered. A Phosphoserine modification is found at Ser-167. Positions Gly-176–Gln-191 are enriched in polar residues. Phosphothreonine is present on Thr-177. Phosphoserine occurs at positions 181 and 362. Ser-367 carries O-linked (GlcNAc) serine glycosylation.

In terms of assembly, interacts with EPS15R and EPS15. Interacts with FCHO1. In terms of processing, O-glycosylated. In terms of tissue distribution, ubiquitously expressed.

Its subcellular location is the nucleus. It is found in the cytoplasmic vesicle. Functionally, required for vesicle docking or fusion during acrosome biogenesis. May play a role in RNA trafficking or localization. In case of infection by HIV-1, acts as a cofactor for viral Rev and promotes movement of Rev-responsive element-containing RNAs from the nuclear periphery to the cytoplasm. This step is essential for HIV-1 replication. The chain is Arf-GAP domain and FG repeat-containing protein 1 (AGFG1) from Homo sapiens (Human).